The following is a 420-amino-acid chain: Deoxyribodipyrimidine photo-lyase (420 aa).

In terms of domain architecture, Photolyase/cryptochrome alpha/beta spans 2 to 124 (GPLLVWHRGD…PLHLLPAPHL (123 aa)). The disordered stretch occupies residues 152–175 (APEALPKGPEEGEIPREDPGLPLP). Positions 159–170 (GPEEGEIPREDP) are enriched in basic and acidic residues. Tyr197 serves as a coordination point for FAD. Arg201 provides a ligand contact to DNA. 209 to 213 (GSRLS) contributes to the FAD binding site. 2 interaction with DNA regions span residues 244–251 (ELLWRDFS) and 310–311 (NR). 341–343 (DGD) contacts FAD. Gln373 serves as a coordination point for DNA.

The protein belongs to the DNA photolyase class-1 family. Monomer. FAD serves as cofactor.

The enzyme catalyses cyclobutadipyrimidine (in DNA) = 2 pyrimidine residues (in DNA).. In terms of biological role, involved in repair of UV radiation-induced DNA damage. Catalyzes the light-dependent monomerization (300-600 nm) of cyclobutyl pyrimidine dimers (in cis-syn configuration), which are formed between adjacent bases on the same DNA strand upon exposure to ultraviolet radiation. The chain is Deoxyribodipyrimidine photo-lyase (phr) from Thermus thermophilus (strain ATCC BAA-163 / DSM 7039 / HB27).